We begin with the raw amino-acid sequence, 374 residues long: tRNA-specific 2-thiouridylase MnmA (374 aa).

Residues 12 to 19 (GMSGGVDS) and methionine 38 each bind ATP. The interaction with target base in tRNA stretch occupies residues 98-100 (NPD). The active-site Nucleophile is cysteine 103. Cysteine 103 and cysteine 202 are oxidised to a cystine. Glycine 128 provides a ligand contact to ATP. Positions 152–154 (KDQ) are interaction with tRNA. Cysteine 202 (cysteine persulfide intermediate) is an active-site residue. Positions 316-317 (RY) are interaction with tRNA.

Belongs to the MnmA/TRMU family.

Its subcellular location is the cytoplasm. The catalysed reaction is S-sulfanyl-L-cysteinyl-[protein] + uridine(34) in tRNA + AH2 + ATP = 2-thiouridine(34) in tRNA + L-cysteinyl-[protein] + A + AMP + diphosphate + H(+). In terms of biological role, catalyzes the 2-thiolation of uridine at the wobble position (U34) of tRNA, leading to the formation of s(2)U34. The sequence is that of tRNA-specific 2-thiouridylase MnmA from Vibrio parahaemolyticus serotype O3:K6 (strain RIMD 2210633).